The sequence spans 670 residues: Protein angel homolog 1 (670 aa).

A phosphoserine mark is found at serine 77 and serine 105.

It belongs to the CCR4/nocturin family.

The polypeptide is Protein angel homolog 1 (ANGEL1) (Homo sapiens (Human)).